Reading from the N-terminus, the 156-residue chain is Putative pre-16S rRNA nuclease (156 aa).

Belongs to the YqgF nuclease family.

The protein localises to the cytoplasm. Functionally, could be a nuclease involved in processing of the 5'-end of pre-16S rRNA. This Bartonella tribocorum (strain CIP 105476 / IBS 506) protein is Putative pre-16S rRNA nuclease.